The primary structure comprises 304 residues: tRNA pseudouridine synthase B (304 aa).

The active-site Nucleophile is the Asp38.

Belongs to the pseudouridine synthase TruB family. Type 1 subfamily.

It catalyses the reaction uridine(55) in tRNA = pseudouridine(55) in tRNA. Responsible for synthesis of pseudouridine from uracil-55 in the psi GC loop of transfer RNAs. This is tRNA pseudouridine synthase B from Geobacter sulfurreducens (strain ATCC 51573 / DSM 12127 / PCA).